Reading from the N-terminus, the 555-residue chain is MTRHDATRVIRAATGTTLTAKSWLTEAPLRMLMNNLDPDVAERPQELVVYGGIGRAARDWESFDAIVAALTRLDEDHTLLVQSGKPVGVFRTHADAPRVLIANSNLVPRWANWDHFNELDQKGLAMYGQMTAGSWIYIGAQGIVQGTYETFVEMGRQHYDGNLAGKWLFTGGLGGMGGAQPLAAVMAGASCLAVECRRSSIDMRLRTGYLDTWTDSLDEALRLIEESCTARKPLSVGLLGNVADVLDELLLRGIRPDLLTDQTSAHDPVNGYLPQGWSVEEWDAKRVSAPKEVEAAARDSMANHIRAMLTFHALGVPTVDYGNNLRQMALEAGVDNAFDFPGFVPAYIRPLFCRGIGPFRWVALSGDPDDIAKTDAKVKELIPDDAHLHRWLDMAADKIAFQGLPARICWVGLGDRHRLGLAFNAMVRSGELKAPVVIGRDHLDSGSVASPNRETEAMADGSDAVSDWPLLNALLNTASGATWVSLHHGGGVGMGFSQHAGMVIVCDGSEAADKRLERVLWNDPATGVMRHADAGYAIATDCAKAKGLDLPGILR.

Residues Gly-51–Gly-52, Gln-129, Gly-175–Gly-177, Glu-195, Gln-262–His-266, Tyr-272–Leu-273, and Tyr-321 contribute to the NAD(+) site. The active site involves Cys-409. Gly-491 is an NAD(+) binding site.

This sequence belongs to the urocanase family. The cofactor is NAD(+).

The protein localises to the cytoplasm. The enzyme catalyses 4-imidazolone-5-propanoate = trans-urocanate + H2O. The protein operates within amino-acid degradation; L-histidine degradation into L-glutamate; N-formimidoyl-L-glutamate from L-histidine: step 2/3. Functionally, catalyzes the conversion of urocanate to 4-imidazolone-5-propionate. This is Urocanate hydratase from Xanthomonas axonopodis pv. citri (strain 306).